The following is a 180-amino-acid chain: Interleukin-1-binding protein (180 aa).

Residues 1-20 (MSILPVIFLPIFFYSPFVQT) form the signal peptide. 3 N-linked (GlcNAc...) asparagine; by host glycosylation sites follow: Asn80, Asn103, and Asn113.

This sequence belongs to the interleukin-1 receptor family. Interacts with mouse Il1b.

Its subcellular location is the secreted. Its function is as follows. May reduce the host inflammatory response by interacting with inteleukin-1 beta (Il1b) and thus decreasing the association between IL1B and its cellular receptor. This is Interleukin-1-binding protein (OPG201) from Monkeypox virus.